The primary structure comprises 259 residues: Indole-3-glycerol phosphate synthase (259 aa).

Belongs to the TrpC family.

The enzyme catalyses 1-(2-carboxyphenylamino)-1-deoxy-D-ribulose 5-phosphate + H(+) = (1S,2R)-1-C-(indol-3-yl)glycerol 3-phosphate + CO2 + H2O. Its pathway is amino-acid biosynthesis; L-tryptophan biosynthesis; L-tryptophan from chorismate: step 4/5. This Dehalococcoides mccartyi (strain ATCC BAA-2266 / KCTC 15142 / 195) (Dehalococcoides ethenogenes (strain 195)) protein is Indole-3-glycerol phosphate synthase.